A 1322-amino-acid polypeptide reads, in one-letter code: Transcription elongation factor SPT6-like (1322 aa).

Residues 1–17 are compositionally biased toward basic and acidic residues; it reads MNRIDEEPQIHEDPVEN. Disordered regions lie at residues 1 to 65 and 90 to 113; these read MNRI…KKDE and KRLKKSSEEEDKINNDDDDDDLSH. Over residues 18–33 the composition is skewed to acidic residues; the sequence is REEDDEDEDDQYEFDD. The segment covering 48–65 has biased composition (basic and acidic residues); the sequence is EQRHCSEKKSRSRRKKDE. Acidic residues predominate over residues 97–110; sequence EEEDKINNDDDDDD. The region spanning 1017-1088 is the S1 motif domain; the sequence is GRIVQATVKK…QRYHVLLVCK (72 aa).

Belongs to the SPT6 family.

Its subcellular location is the nucleus. In terms of biological role, transcription elongation factor that enhances the transcription elongation by RNA polymerase II (RNAPII). The chain is Transcription elongation factor SPT6-like from Arabidopsis thaliana (Mouse-ear cress).